Reading from the N-terminus, the 417-residue chain is Serine hydroxymethyltransferase 1 (417 aa).

(6S)-5,6,7,8-tetrahydrofolate contacts are provided by residues L121 and G125–L127. N6-(pyridoxal phosphate)lysine is present on K229. S354 to F356 serves as a coordination point for (6S)-5,6,7,8-tetrahydrofolate.

This sequence belongs to the SHMT family. Homodimer. Pyridoxal 5'-phosphate is required as a cofactor.

Its subcellular location is the cytoplasm. It catalyses the reaction (6R)-5,10-methylene-5,6,7,8-tetrahydrofolate + glycine + H2O = (6S)-5,6,7,8-tetrahydrofolate + L-serine. The protein operates within one-carbon metabolism; tetrahydrofolate interconversion. It functions in the pathway amino-acid biosynthesis; glycine biosynthesis; glycine from L-serine: step 1/1. Its function is as follows. Catalyzes the reversible interconversion of serine and glycine with tetrahydrofolate (THF) serving as the one-carbon carrier. This reaction serves as the major source of one-carbon groups required for the biosynthesis of purines, thymidylate, methionine, and other important biomolecules. Also exhibits THF-independent aldolase activity toward beta-hydroxyamino acids, producing glycine and aldehydes, via a retro-aldol mechanism. The chain is Serine hydroxymethyltransferase 1 from Pseudomonas fluorescens (strain ATCC BAA-477 / NRRL B-23932 / Pf-5).